The primary structure comprises 434 residues: Methylenetetrahydrofolate--tRNA-(uracil-5-)-methyltransferase TrmFO (434 aa).

G9 to G14 is a binding site for FAD.

Belongs to the MnmG family. TrmFO subfamily. Requires FAD as cofactor.

The protein resides in the cytoplasm. The catalysed reaction is uridine(54) in tRNA + (6R)-5,10-methylene-5,6,7,8-tetrahydrofolate + NADH + H(+) = 5-methyluridine(54) in tRNA + (6S)-5,6,7,8-tetrahydrofolate + NAD(+). The enzyme catalyses uridine(54) in tRNA + (6R)-5,10-methylene-5,6,7,8-tetrahydrofolate + NADPH + H(+) = 5-methyluridine(54) in tRNA + (6S)-5,6,7,8-tetrahydrofolate + NADP(+). Functionally, catalyzes the folate-dependent formation of 5-methyl-uridine at position 54 (M-5-U54) in all tRNAs. This chain is Methylenetetrahydrofolate--tRNA-(uracil-5-)-methyltransferase TrmFO, found in Listeria innocua serovar 6a (strain ATCC BAA-680 / CLIP 11262).